Consider the following 502-residue polypeptide: MSLNKKLALIIIDGLGIGKKDDTNAVYLANPKTLNYLIKNYPTLEISAAQQPIGLLENQAGNSEIGHLTIGAGRIILNDNANINSYTKRLDYESLVLNDINNEIVHVVGMYSNGLVHSNYEHIHWIIKELVKNNNQVVLHLISDGRDDYPYGFAQFIEQINALKTQYNVIIKSLSGRYFAMDRDQRWERTQKAFNTMFIKQDKICEQSLLEVAQSIANHYESDEFVEPIVFNNDEKYNLKPYQKVILTNYRSDRMRQLAHLLKPNRKFNYHNPFLIKDIHLITLVPFPDVDAITLFEKQNLNNTLGDVLNDHHIKQARVAETEKYGHISFFFDGGINKHYASKTQYLIPSQKVATYDLCPQMSASLITKTIIDHYFDHDVFIVNYANPDMVGHSGNMKQTIQAILSVDSEIQKLYDFFKKNNGVLMITGDHGNAETMIDANGQIITSHSINDVWFIITDNNIVFDQTQKFSLANIAPTILEYLNIKKPIEMAASSMIKKIHK.

Mn(2+) contacts are provided by aspartate 13 and serine 63. Serine 63 functions as the Phosphoserine intermediate in the catalytic mechanism. Residues histidine 117, 146 to 147 (RD), arginine 177, arginine 183, 251 to 254 (RSDR), and lysine 324 each bind substrate. Positions 389, 393, 430, 431, and 448 each coordinate Mn(2+).

Belongs to the BPG-independent phosphoglycerate mutase family. Monomer. Mn(2+) is required as a cofactor.

The enzyme catalyses (2R)-2-phosphoglycerate = (2R)-3-phosphoglycerate. Its pathway is carbohydrate degradation; glycolysis; pyruvate from D-glyceraldehyde 3-phosphate: step 3/5. Functionally, catalyzes the interconversion of 2-phosphoglycerate and 3-phosphoglycerate. The protein is 2,3-bisphosphoglycerate-independent phosphoglycerate mutase of Ureaplasma urealyticum serovar 10 (strain ATCC 33699 / Western).